Consider the following 473-residue polypeptide: Histidinol dehydrogenase, chloroplastic (473 aa).

Residues 1 to 28 are disordered; sequence MSLRPGRAHPLAASPLHTPLPARPRPQL. NAD(+)-binding residues include tyrosine 162, glutamine 224, and asparagine 247. 3 residues coordinate substrate: serine 273, glutamine 295, and histidine 298. Positions 295 and 298 each coordinate Zn(2+). Active-site proton acceptor residues include glutamate 363 and histidine 364. The substrate site is built by histidine 364, aspartate 397, glutamate 451, and histidine 456. Aspartate 397 provides a ligand contact to Zn(2+). Residue histidine 456 participates in Zn(2+) binding.

Belongs to the histidinol dehydrogenase family. The cofactor is Zn(2+).

It localises to the plastid. Its subcellular location is the chloroplast. The enzyme catalyses L-histidinol + 2 NAD(+) + H2O = L-histidine + 2 NADH + 3 H(+). Its pathway is amino-acid biosynthesis; L-histidine biosynthesis; L-histidine from 5-phospho-alpha-D-ribose 1-diphosphate: step 9/9. Its function is as follows. Catalyzes the sequential NAD-dependent oxidations of L-histidinol to L-histidinaldehyde and then to L-histidine. The chain is Histidinol dehydrogenase, chloroplastic (HDH) from Oryza sativa subsp. japonica (Rice).